The chain runs to 93 residues: Large ribosomal subunit protein bL31B (93 aa).

The protein belongs to the bacterial ribosomal protein bL31 family. Type B subfamily. Part of the 50S ribosomal subunit.

This Pseudomonas syringae pv. syringae (strain B728a) protein is Large ribosomal subunit protein bL31B.